Here is a 255-residue protein sequence, read N- to C-terminus: Triosephosphate isomerase (255 aa).

Residue 9–11 (NWK) coordinates substrate. H96 (electrophile) is an active-site residue. E168 functions as the Proton acceptor in the catalytic mechanism. Substrate-binding residues include G174 and S213.

It belongs to the triosephosphate isomerase family. As to quaternary structure, homodimer.

It is found in the cytoplasm. It carries out the reaction D-glyceraldehyde 3-phosphate = dihydroxyacetone phosphate. It functions in the pathway carbohydrate biosynthesis; gluconeogenesis. It participates in carbohydrate degradation; glycolysis; D-glyceraldehyde 3-phosphate from glycerone phosphate: step 1/1. In terms of biological role, involved in the gluconeogenesis. Catalyzes stereospecifically the conversion of dihydroxyacetone phosphate (DHAP) to D-glyceraldehyde-3-phosphate (G3P). In Buchnera aphidicola subsp. Acyrthosiphon pisum (strain APS) (Acyrthosiphon pisum symbiotic bacterium), this protein is Triosephosphate isomerase.